A 201-amino-acid chain; its full sequence is Holliday junction branch migration complex subunit RuvA (201 aa).

The interval 1–63 (MIAYLSGVVR…EDAQLLFGFP (63 aa)) is domain I. The domain II stretch occupies residues 64-142 (DADHLKLFDL…EHLAAAASGA (79 aa)). The interval 143 to 150 (AGGKRPAR) is flexible linker. Residues 151–201 (VSSTAGHDAVDALLALGFREAQVRAAVAELLGADPEASADTLIRKALGRLR) are domain III.

It belongs to the RuvA family. As to quaternary structure, homotetramer. Forms an RuvA(8)-RuvB(12)-Holliday junction (HJ) complex. HJ DNA is sandwiched between 2 RuvA tetramers; dsDNA enters through RuvA and exits via RuvB. An RuvB hexamer assembles on each DNA strand where it exits the tetramer. Each RuvB hexamer is contacted by two RuvA subunits (via domain III) on 2 adjacent RuvB subunits; this complex drives branch migration. In the full resolvosome a probable DNA-RuvA(4)-RuvB(12)-RuvC(2) complex forms which resolves the HJ.

Its subcellular location is the cytoplasm. Its function is as follows. The RuvA-RuvB-RuvC complex processes Holliday junction (HJ) DNA during genetic recombination and DNA repair, while the RuvA-RuvB complex plays an important role in the rescue of blocked DNA replication forks via replication fork reversal (RFR). RuvA specifically binds to HJ cruciform DNA, conferring on it an open structure. The RuvB hexamer acts as an ATP-dependent pump, pulling dsDNA into and through the RuvAB complex. HJ branch migration allows RuvC to scan DNA until it finds its consensus sequence, where it cleaves and resolves the cruciform DNA. The chain is Holliday junction branch migration complex subunit RuvA from Deinococcus radiodurans (strain ATCC 13939 / DSM 20539 / JCM 16871 / CCUG 27074 / LMG 4051 / NBRC 15346 / NCIMB 9279 / VKM B-1422 / R1).